Consider the following 83-residue polypeptide: Translational regulator CsrA (83 aa).

This sequence belongs to the CsrA/RsmA family. In terms of assembly, homodimer; the beta-strands of each monomer intercalate to form a hydrophobic core, while the alpha-helices form wings that extend away from the core.

The protein resides in the cytoplasm. Functionally, a translational regulator that binds mRNA to regulate translation initiation and/or mRNA stability. Usually binds in the 5'-UTR at or near the Shine-Dalgarno sequence preventing ribosome-binding, thus repressing translation. Its main target seems to be the major flagellin gene, while its function is anatagonized by FliW. This is Translational regulator CsrA from Nocardioides sp. (strain ATCC BAA-499 / JS614).